The sequence spans 276 residues: Aldo-keto reductase Mjls_1919 (276 aa).

The Proton donor role is filled by Y50. NADPH-binding residues include L190, I228, K230, S231, V232, R236, S239, and N240.

It belongs to the aldo/keto reductase family.

This chain is Aldo-keto reductase Mjls_1919, found in Mycobacterium sp. (strain JLS).